The sequence spans 398 residues: Type III polyketide synthase pspB (398 aa).

CoA is bound by residues K47 and 47 to 54 (KLLQINRS). C152 acts as the Nucleophile in catalysis. Position 214–215 (214–215 (SD)) interacts with substrate. CoA-binding positions include L267, G321, 321 to 324 (GGEA), and A324.

Belongs to the thiolase-like superfamily. Chalcone/stilbene synthases family. Homodimer.

It carries out the reaction 11 malonyl-CoA + acetyl-CoA + S-adenosyl-L-methionine + 12 NADPH + 22 H(+) = soppiline B + S-adenosyl-L-homocysteine + 12 CO2 + 12 NADP(+) + 12 CoA + 8 H2O. It functions in the pathway secondary metabolite biosynthesis. Its function is as follows. Type III polyketide synthase; part of the gene cluster that mediates the biosynthesis of the alkylresorcinols called soppilines. The biosynthesis starts with the HR-PKS pspA-catalyzed carbon chain assembly through nine chain elongation cycles, using acetyl CoA and malonyl CoA as a starter and extender units, respectively, to produce the polyketide soppiline A. In the first round, the KR, DH, and CMeT domains work to produce 2-methyl-2-butenyl thioester. In rounds 2 to 5, the KR, DH, and ER domains fully catalyze the reduction of the elongated beta-ketothioester, resulting in the insertion of eight methylene units. The unusual Z,E,Z-triene motif is likely constructed during rounds 6 to 8. Typically, the DH domain introduces a double bond at an alpha,beta-position of an elongated polyketide chain, with the dehydration of a beta-hydroxy group. The last extension cycle would be carried out with L-oriented beta-ketoreduction by the KR domain to produce beta-hydroxy carboxylic acid soppiline A. The type III PKS pspB intercepts the elongated polyketide chain at round 8 from the HR-PKS pspA, followed by a tri-keto extension and decarboxylative aldol cyclization to produce 1,3,5-trisubstituted alkylresorcinol soppiline B. Subsequently, the cytochrome P450 monooxygenase pspC catalyzes three-step oxidations at the C-4 methyl group to carboxylic acid to yield soppiline C. The sequence is that of Type III polyketide synthase pspB from Penicillium soppii.